The sequence spans 224 residues: Small ribosomal subunit protein uS2 (224 aa).

Residues methionine 1 to valine 14 show a composition bias toward basic and acidic residues. The tract at residues methionine 1–glycine 32 is disordered.

This sequence belongs to the universal ribosomal protein uS2 family.

In Methanosarcina mazei (strain ATCC BAA-159 / DSM 3647 / Goe1 / Go1 / JCM 11833 / OCM 88) (Methanosarcina frisia), this protein is Small ribosomal subunit protein uS2.